Reading from the N-terminus, the 187-residue chain is Peptidyl-tRNA hydrolase (187 aa).

Position 18 (tyrosine 18) interacts with tRNA. The active-site Proton acceptor is the histidine 23. The tRNA site is built by phenylalanine 65, asparagine 67, and asparagine 113.

This sequence belongs to the PTH family. In terms of assembly, monomer.

The protein localises to the cytoplasm. The enzyme catalyses an N-acyl-L-alpha-aminoacyl-tRNA + H2O = an N-acyl-L-amino acid + a tRNA + H(+). Hydrolyzes ribosome-free peptidyl-tRNAs (with 1 or more amino acids incorporated), which drop off the ribosome during protein synthesis, or as a result of ribosome stalling. In terms of biological role, catalyzes the release of premature peptidyl moieties from peptidyl-tRNA molecules trapped in stalled 50S ribosomal subunits, and thus maintains levels of free tRNAs and 50S ribosomes. The polypeptide is Peptidyl-tRNA hydrolase (Coxiella burnetii (strain CbuG_Q212) (Coxiella burnetii (strain Q212))).